The chain runs to 184 residues: Muscle-specific protein 20 (184 aa).

One can recognise a Calponin-homology (CH) domain in the interval P17–T122. A Calponin-like repeat occupies V157–L181.

The protein belongs to the calponin family. As to expression, found in synchronous muscle; not found in asynchronous indirect flight muscle.

The sequence is that of Muscle-specific protein 20 (Mp20) from Drosophila melanogaster (Fruit fly).